Here is a 545-residue protein sequence, read N- to C-terminus: Methionine--tRNA ligase (545 aa).

The 'HIGH' region motif lies at 15–25 (PYANGPIHIGH). Residues cysteine 146, cysteine 149, cysteine 159, and cysteine 162 each contribute to the Zn(2+) site. Residues 332–336 (KLSKS) carry the 'KMSKS' region motif. Lysine 335 serves as a coordination point for ATP.

It belongs to the class-I aminoacyl-tRNA synthetase family. MetG type 1 subfamily. Monomer. The cofactor is Zn(2+).

The protein resides in the cytoplasm. The enzyme catalyses tRNA(Met) + L-methionine + ATP = L-methionyl-tRNA(Met) + AMP + diphosphate. Functionally, is required not only for elongation of protein synthesis but also for the initiation of all mRNA translation through initiator tRNA(fMet) aminoacylation. The sequence is that of Methionine--tRNA ligase (metG) from Buchnera aphidicola subsp. Schizaphis graminum (strain Sg).